The primary structure comprises 413 residues: Elongation factor 1-alpha (413 aa).

A tr-type G domain is found at 5-211; the sequence is KEHMNLAFIG…DDLEAPEKPV (207 aa). A G1 region spans residues 14-21; that stretch reads GHVDHGKS. A GTP-binding site is contributed by 14–21; sequence GHVDHGKS. S21 lines the Mg(2+) pocket. The interval 60–64 is G2; the sequence is GVTID. Residues 81-84 are G3; the sequence is DCPG. GTP is bound by residues 81–85 and 136–139; these read DCPGH and NKMD. A G4 region spans residues 136 to 139; it reads NKMD. Residues 175 to 177 are G5; it reads SAF.

This sequence belongs to the TRAFAC class translation factor GTPase superfamily. Classic translation factor GTPase family. EF-Tu/EF-1A subfamily.

Its subcellular location is the cytoplasm. The catalysed reaction is GTP + H2O = GDP + phosphate + H(+). Functionally, GTP hydrolase that promotes the GTP-dependent binding of aminoacyl-tRNA to the A-site of ribosomes during protein biosynthesis. The sequence is that of Elongation factor 1-alpha from Methanothermobacter thermautotrophicus (strain ATCC 29096 / DSM 1053 / JCM 10044 / NBRC 100330 / Delta H) (Methanobacterium thermoautotrophicum).